Reading from the N-terminus, the 415-residue chain is Histidine--tRNA ligase (415 aa).

Belongs to the class-II aminoacyl-tRNA synthetase family. Homodimer.

The protein resides in the cytoplasm. It catalyses the reaction tRNA(His) + L-histidine + ATP = L-histidyl-tRNA(His) + AMP + diphosphate + H(+). The chain is Histidine--tRNA ligase from Clostridium botulinum (strain Langeland / NCTC 10281 / Type F).